We begin with the raw amino-acid sequence, 159 residues long: Bacterial non-heme ferritin (159 aa).

A Ferritin-like diiron domain is found at 1-145 (MISEKLQNAI…GIVDKIKRAG (145 aa)). Residues Glu-17, Glu-50, His-53, Glu-94, and Gln-127 each coordinate Fe cation.

The protein belongs to the ferritin family. Prokaryotic subfamily. As to quaternary structure, homooligomer of 24 subunits that assemble into a spherical protein shell (12 +/- 1 nM diameter) that can sequester at least 2000 iron atoms.

The enzyme catalyses 4 Fe(2+) + O2 + 6 H2O = 4 iron(III) oxide-hydroxide + 12 H(+). Its function is as follows. May alleviate iron toxicity in the presence of oxygen. This is Bacterial non-heme ferritin (ftnA) from Bacteroides fragilis (strain 638R).